The chain runs to 232 residues: Anti-sigma-K factor RskA (232 aa).

Topologically, residues 1–90 (MTEHTDFELL…EVRRQSRWRT (90 aa)) are cytoplasmic. Residues 91–111 (AAFASAAAIAVGLGAFGLGVL) form a helical membrane-spanning segment. Topologically, residues 112 to 232 (TRPSPPPTVA…GTILAELPLG (121 aa)) are extracellular.

The protein belongs to the anti-sigma-K factor family.

The protein localises to the cell membrane. Its function is as follows. An anti-sigma factor for extracytoplasmic function (ECF) sigma factor SigK. ECF sigma factors are held in an inactive form by an anti-sigma factor until released by regulated intramembrane proteolysis (RIP). RIP occurs when an extracytoplasmic signal triggers a concerted proteolytic cascade to transmit information and elicit cellular responses. The membrane-spanning regulatory substrate protein is first cut extracytoplasmically (site-1 protease, S1P), then within the membrane itself (site-2 protease, S2P, Rip1), while cytoplasmic proteases finish degrading the regulatory protein, liberating the sigma factor. The chain is Anti-sigma-K factor RskA (rskA) from Mycobacterium tuberculosis (strain ATCC 25177 / H37Ra).